A 384-amino-acid polypeptide reads, in one-letter code: 4-coumarate--CoA ligase (384 aa).

This sequence belongs to the ATP-dependent AMP-binding enzyme family.

The enzyme catalyses (E)-4-coumarate + ATP + CoA = (E)-4-coumaroyl-CoA + AMP + diphosphate. Functionally, converts p-coumaric acid into p-coumaryl CoA. This is necessary for the activation of the photoactive yellow protein (PYP) chromophore. In Rhodobacter capsulatus (strain ATCC BAA-309 / NBRC 16581 / SB1003), this protein is 4-coumarate--CoA ligase (pcl).